The sequence spans 166 residues: 6,7-dimethyl-8-ribityllumazine synthase (166 aa).

5-amino-6-(D-ribitylamino)uracil contacts are provided by residues Trp31, 63–65, and 85–87; these read SFE and VII. 90–91 contributes to the (2S)-2-hydroxy-3-oxobutyl phosphate binding site; that stretch reads GT. His93 functions as the Proton donor in the catalytic mechanism. Phe118 lines the 5-amino-6-(D-ribitylamino)uracil pocket. Arg132 contributes to the (2S)-2-hydroxy-3-oxobutyl phosphate binding site.

Belongs to the DMRL synthase family.

It catalyses the reaction (2S)-2-hydroxy-3-oxobutyl phosphate + 5-amino-6-(D-ribitylamino)uracil = 6,7-dimethyl-8-(1-D-ribityl)lumazine + phosphate + 2 H2O + H(+). The protein operates within cofactor biosynthesis; riboflavin biosynthesis; riboflavin from 2-hydroxy-3-oxobutyl phosphate and 5-amino-6-(D-ribitylamino)uracil: step 1/2. Catalyzes the formation of 6,7-dimethyl-8-ribityllumazine by condensation of 5-amino-6-(D-ribitylamino)uracil with 3,4-dihydroxy-2-butanone 4-phosphate. This is the penultimate step in the biosynthesis of riboflavin. In Cutibacterium acnes (strain DSM 16379 / KPA171202) (Propionibacterium acnes), this protein is 6,7-dimethyl-8-ribityllumazine synthase.